Reading from the N-terminus, the 232-residue chain is GFP-like fluorescent chromoprotein dsFP483 (232 aa).

The 2-iminomethyl-5-imidazolinone (Gln-Gly) cross-link spans 66–68; that stretch reads QYG. 2,3-didehydrotyrosine is present on Tyr-67.

It belongs to the GFP family. Contains a chromophore consisting of modified amino acid residues. The chromophore is formed by autocatalytic backbone condensation between Xaa-N and Gly-(N+2), oxidation of Tyr-(N+1) to didehydrotyrosine, and formation of a double bond to the alpha-amino nitrogen of residue Xaa-N. Maturation of the chromophore requires nothing other than molecular oxygen. The precise stereochemistry of the tyrosine has not been determined. Oral disk.

Its function is as follows. Pigment protein that is green in color. This is GFP-like fluorescent chromoprotein dsFP483 from Discosoma striata (Striped mushroom).